The following is a 538-amino-acid chain: MSFSATILFSPPSGSEARCCCCACKSETNGGNTGSQGGNPPPSTPITVTGHGLAVQSSEQLLHVIYQRVDKAVGLAEAALGLARANNELLKRLQEEVGDLRQGKVSIPDEDGESRAHSSPPEEPGPLKESPGEAFKALSAVEEECDSVGSGVQVVIEELRQLGAASVGPGPLGFPATQRDMRLPGCTLAASEAAPLLNPLVDDYVASEGAVQRVLVPAYAKQLSPATQLAIQRATPETGPENGTKLPPPRPEDMLNAAAALDSALEESGPGSTGELRHSLGLTVSPCRTRGSGQKNSRRKRDLVLSKLVHNVHNHITNDKRFNGSESIKSSWNISVVKFLLEKLKQELVTSPHNYTDKELKGACVAYFLTKRREYRNSLNPFKGLKEKEEKKLRSRRYRLFANRSSIMRHFGPEDQRLWNDVTEELMSDEEDSLNEPGVWVARPPRFRAQRLTELCYHLDANSKHGTKANRVYGPPSDRLPSAEAQLLPPELYNPNFQEEEDEGGDENAPGSPSFDQPHKTCCPDLNSFIEIKVEKDE.

The N-terminal stretch at 1-17 (MSFSATILFSPPSGSEA) is a signal peptide. The interval 101–131 (RQGKVSIPDEDGESRAHSSPPEEPGPLKESP) is disordered. Residues lysine 128 and lysine 221 each participate in a glycyl lysine isopeptide (Lys-Gly) (interchain with G-Cter in SUMO2) cross-link. Serine 224 bears the Phosphoserine mark. Residues 233-253 (RATPETGPENGTKLPPPRPED) are disordered. 2 positions are modified to phosphoserine: serine 285 and serine 428. The tract at residues 488-523 (LPPELYNPNFQEEEDEGGDENAPGSPSFDQPHKTCC) is disordered.

The protein localises to the secreted. This is an uncharacterized protein from Homo sapiens (Human).